The sequence spans 621 residues: UvrABC system protein C (621 aa).

Residues 21-100 (AEPGVYLMRD…IKTYQPPYNV (80 aa)) form the GIY-YIG domain. The UVR domain occupies 210–245 (DELIRELKEKMAQAAQQENYEAAARYRDQIRGLEQL).

This sequence belongs to the UvrC family. In terms of assembly, interacts with UvrB in an incision complex.

Its subcellular location is the cytoplasm. Functionally, the UvrABC repair system catalyzes the recognition and processing of DNA lesions. UvrC both incises the 5' and 3' sides of the lesion. The N-terminal half is responsible for the 3' incision and the C-terminal half is responsible for the 5' incision. The chain is UvrABC system protein C from Synechococcus sp. (strain JA-3-3Ab) (Cyanobacteria bacterium Yellowstone A-Prime).